Here is a 427-residue protein sequence, read N- to C-terminus: Serine--tRNA ligase (427 aa).

An L-serine-binding site is contributed by 233–235 (TAE). 264–266 (RSE) contributes to the ATP binding site. L-serine is bound at residue E287. 351–354 (EISS) contributes to the ATP binding site. An L-serine-binding site is contributed by S386.

This sequence belongs to the class-II aminoacyl-tRNA synthetase family. Type-1 seryl-tRNA synthetase subfamily. In terms of assembly, homodimer. The tRNA molecule binds across the dimer.

The protein localises to the cytoplasm. It catalyses the reaction tRNA(Ser) + L-serine + ATP = L-seryl-tRNA(Ser) + AMP + diphosphate + H(+). The enzyme catalyses tRNA(Sec) + L-serine + ATP = L-seryl-tRNA(Sec) + AMP + diphosphate + H(+). It participates in aminoacyl-tRNA biosynthesis; selenocysteinyl-tRNA(Sec) biosynthesis; L-seryl-tRNA(Sec) from L-serine and tRNA(Sec): step 1/1. In terms of biological role, catalyzes the attachment of serine to tRNA(Ser). Is also able to aminoacylate tRNA(Sec) with serine, to form the misacylated tRNA L-seryl-tRNA(Sec), which will be further converted into selenocysteinyl-tRNA(Sec). In Thiobacillus denitrificans (strain ATCC 25259 / T1), this protein is Serine--tRNA ligase.